Reading from the N-terminus, the 3302-residue chain is Xin actin-binding repeat-containing protein 2 (3302 aa).

The interval 166-204 (NDSEETLKPSSAMGTSSYTSARQSKETSTSSYSNHSLTS) is disordered. Residues 173 to 187 (KPSSAMGTSSYTSAR) show a composition bias toward polar residues. Low complexity predominate over residues 191–204 (ETSTSSYSNHSLTS). 7 Xin repeats span residues 306-321 (AGVQQARYVFENTNDS), 341-356 (GEVQSIRWIFENQPLD), 381-396 (GDVKYTTWMFETQPID), 418-433 (GDVCTARWMFETRPLD), 456-471 (GDVKTVRYMFETQQLD), 496-511 (GNVKRSIKCFETQPLY), and 534-549 (GDVRTARWMFETQPLD). Ser565 bears the Phosphoserine mark. Xin repeat units lie at residues 572 to 587 (GEVGRARWLFETQPLE) and 606 to 621 (IDVSKKCWMFETQPLD). At Ser633 the chain carries Phosphoserine. Xin repeat units lie at residues 640-655 (GDVKTTKHLLETLPIE), 677-692 (GDVKHQKWVFETQRLE), 713-728 (GHVKNYTHIFESNNLI), 744-759 (GTVELNKSLFETTPLY), and 782-797 (GDVRSCRWLFETRPID). Ser813 is modified (phosphoserine). 11 Xin repeats span residues 820-835 (GNVKSARWLFETQPLD), 859-874 (GDVKTCKWLFETQPME), 892-907 (GDVRTCMWLFETQPLD), 930-945 (GDVRTACLLFETENLD), 965-980 (GDVSGMKYKFENQSLD), 1004-1019 (GNVLNCRWLFENQPID), 1040-1055 (GDVRKGCFIFETFSLD), 1077-1092 (GDVKSYKMLFETQPLY), 1115-1130 (GDVRGTRWLFETKPLD), 1152-1167 (GDVSSVRYRFETQPLD), and 1186-1201 (GNVQMNKQLFESEGGD). Position 1210 is a phosphoserine (Ser1210). 3 Xin repeats span residues 1217–1232 (GNVKTSTWLFETHSID), 1254–1269 (GDVKQAVWLFENQTLD), and 1289–1304 (SDVKTTTWLFETTPIH). Residue Ser1573 is modified to Phosphoserine. Disordered stretches follow at residues 1848–1882 (VSASMSRKKSLKTKESENVRESKDDVSSTQSVDKT), 1920–1939 (AETQSYRPDPTQHPVSNPAG), 1957–2002 (EKQN…APDK), 2039–2296 (YPDC…KPYM), 2311–2378 (RQQR…SKAV), 2546–2593 (YAAK…ESRV), and 2626–2687 (NFQQ…RESQ). Residues 1859 to 1873 (KTKESENVRESKDDV) show a composition bias toward basic and acidic residues. At Thr1930 the chain carries Phosphothreonine. Ser1935 is subject to Phosphoserine. Residues 1957-1969 (EKQNSNKDMRKND) are compositionally biased toward basic and acidic residues. Composition is skewed to pro residues over residues 2051–2062 (LPPPSPPPPPPS) and 2125–2134 (SLPPPPPTAP). Positions 2135–2145 (SQPAHLLSSSV) are enriched in low complexity. Residue Ser2158 is modified to Phosphoserine. The span at 2158 to 2167 (SRKETLDSHQ) shows a compositional bias: basic and acidic residues. An interacts with NEBL region spans residues 2181–2186 (PPTLPK). A phosphoserine mark is found at Ser2198, Ser2211, and Ser2252. Residues 2205–2243 (ELERSLSDVEIKTTLSKDQKSSLVAESREHTEAKQEVFR) are compositionally biased toward basic and acidic residues. Polar residues-rich tracts occupy residues 2251-2263 (LSISSANSLSQTV) and 2282-2292 (SFPSGSEQQSP). Positions 2303–2328 (LMIAEEKYRQQREELEKQRRESSCHS) form a coiled coil. 2 stretches are compositionally biased toward basic and acidic residues: residues 2311–2325 (RQQREELEKQRRESS) and 2333–2350 (ETQHRSLSEKEKETELQK). Residues 2626–2635 (NFQQTQTQTS) are compositionally biased toward polar residues. A compositionally biased stretch (basic and acidic residues) spans 2636-2659 (RIEHKELSQPYSEKKCLRDKDKQQ). Over residues 2674–2685 (TQKQSSFSSVRE) the composition is skewed to polar residues. Coiled coils occupy residues 2696-2724 (NILEFLRKREELQQILSRVKQFEADSNKS) and 2751-2777 (RVAMENNLEKVKEEIIHIKTQAEEMLV). Residues 2835 to 2934 (RQVATHSEAA…PSPPRSRSEQ (100 aa)) form a disordered region. Polar residues-rich tracts occupy residues 2836 to 2850 (QVATHSEAATHNPAK) and 2891 to 2903 (KSELSQSPKNNSC). The span at 2907–2916 (LPRRPMEHTS) shows a compositional bias: basic and acidic residues. Residues Ser2987 and Ser3225 each carry the phosphoserine modification. A disordered region spans residues 3278–3302 (QGNLHNLSKDGLSNGVPRSRPAEFS).

The protein belongs to the Xin family. As to quaternary structure, interacts with ACTN2. Interacts with F-actin. Interacts with NEBL (via SH3 domain). Interacts with Kcna5/Kv1.5 and Scn5a/Nav1.5; the interactions are required for normal action potential configuration in the heart.

It is found in the cell junction. In terms of biological role, protects actin filaments from depolymerization. Required for correct morphology of cell membranes and maturation of intercalated disks of cardiomyocytes via facilitating localization of XIRP1 and CDH2 to the termini of aligned mature cardiomyocytes. Thereby required for correct postnatal heart development and growth regulation that is crucial for overall heart morphology and diastolic function. Required for normal electrical conduction in the heart including formation of the infranodal ventricular conduction system and normal action potential configuration, as a result of its interaction with the cardiac ion channel components Scn5a/Nav1.5 and Kcna5/Kv1.5. Required for regular actin filament spacing of the paracrystalline array in both inner and outer hair cells of the cochlea, thereby required for maintenance of stereocilia morphology. This Rattus norvegicus (Rat) protein is Xin actin-binding repeat-containing protein 2.